Here is a 346-residue protein sequence, read N- to C-terminus: N-acetyl-gamma-glutamyl-phosphate reductase (346 aa).

Residue C149 is part of the active site.

Belongs to the NAGSA dehydrogenase family. Type 1 subfamily.

It is found in the cytoplasm. It catalyses the reaction N-acetyl-L-glutamate 5-semialdehyde + phosphate + NADP(+) = N-acetyl-L-glutamyl 5-phosphate + NADPH + H(+). Its pathway is amino-acid biosynthesis; L-arginine biosynthesis; N(2)-acetyl-L-ornithine from L-glutamate: step 3/4. In terms of biological role, catalyzes the NADPH-dependent reduction of N-acetyl-5-glutamyl phosphate to yield N-acetyl-L-glutamate 5-semialdehyde. This chain is N-acetyl-gamma-glutamyl-phosphate reductase, found in Desulfotalea psychrophila (strain LSv54 / DSM 12343).